The sequence spans 1502 residues: G patch domain-containing protein 8 (1502 aa).

The G-patch domain occupies Ser40–Met86. Residues Asp89 to Ala124 are a coiled coil. The C2H2-type zinc finger occupies Phe136–His160. Residues Arg172–Ser251 form a disordered region. Residues Ser182 to Ala206 are compositionally biased toward basic and acidic residues. A compositionally biased stretch (acidic residues) spans Val223–Asp233. A Glycyl lysine isopeptide (Lys-Gly) (interchain with G-Cter in SUMO2) cross-link involves residue Lys311. Composition is skewed to basic and acidic residues over residues Ala323–Ser339 and Asn424–Lys436. 2 disordered regions span residues Ala323 to Pro391 and Gln419 to Leu541. The span at Ser459–Glu472 shows a compositional bias: polar residues. Residue Lys479 is modified to N6-acetyllysine. Ser491 carries the phosphoserine modification. Over residues Ser491–Ala519 the composition is skewed to polar residues. Residue Lys577 forms a Glycyl lysine isopeptide (Lys-Gly) (interchain with G-Cter in SUMO2) linkage. Basic and acidic residues-rich tracts occupy residues Ser579–Val623 and Ser653–Gly670. The segment at Ser579–Ser1301 is disordered. Position 653 is a phosphoserine (Ser653). Residues Lys671–Lys692 are compositionally biased toward basic residues. The segment covering Ala693 to Lys707 has biased composition (basic and acidic residues). The segment covering Ser708 to Lys720 has biased composition (basic residues). A compositionally biased stretch (pro residues) spans Pro733 to Pro743. A phosphoserine mark is found at Ser738, Ser740, and Ser758. The segment covering Ala750–Gly772 has biased composition (basic and acidic residues). 2 stretches are compositionally biased toward basic residues: residues Ala799–His809 and Ser852–Arg867. Positions Arg868 to Asp896 are enriched in low complexity. Phosphoserine is present on residues Ser911 and Ser914. Basic residues predominate over residues Ser919–Tyr928. Residues Ser981, Ser1009, Ser1014, Ser1033, and Ser1035 each carry the phosphoserine modification. Over residues Trp1010 to Arg1027 the composition is skewed to basic and acidic residues. Residues Gly1042–Lys1059 show a composition bias toward basic and acidic residues. Ser1081 is modified (phosphoserine). Basic and acidic residues-rich tracts occupy residues Leu1093 to Val1108 and Lys1159 to Glu1171. Lys1105 is covalently cross-linked (Glycyl lysine isopeptide (Lys-Gly) (interchain with G-Cter in SUMO2)). The residue at position 1107 (Ser1107) is a Phosphoserine. Residue Ser1175 is modified to Phosphoserine.

In Homo sapiens (Human), this protein is G patch domain-containing protein 8 (GPATCH8).